The primary structure comprises 207 residues: Thiamine-phosphate synthase (207 aa).

4-amino-2-methyl-5-(diphosphooxymethyl)pyrimidine-binding positions include 37–41 and Asn-69; that span reads QYRDK. 2 residues coordinate Mg(2+): Asp-70 and Asp-89. Ser-108 contacts 4-amino-2-methyl-5-(diphosphooxymethyl)pyrimidine. Position 135–137 (135–137) interacts with 2-[(2R,5Z)-2-carboxy-4-methylthiazol-5(2H)-ylidene]ethyl phosphate; that stretch reads SRT. 4-amino-2-methyl-5-(diphosphooxymethyl)pyrimidine is bound at residue Lys-138. Residue Gly-164 participates in 2-[(2R,5Z)-2-carboxy-4-methylthiazol-5(2H)-ylidene]ethyl phosphate binding.

Belongs to the thiamine-phosphate synthase family. Mg(2+) serves as cofactor.

The enzyme catalyses 2-[(2R,5Z)-2-carboxy-4-methylthiazol-5(2H)-ylidene]ethyl phosphate + 4-amino-2-methyl-5-(diphosphooxymethyl)pyrimidine + 2 H(+) = thiamine phosphate + CO2 + diphosphate. It catalyses the reaction 2-(2-carboxy-4-methylthiazol-5-yl)ethyl phosphate + 4-amino-2-methyl-5-(diphosphooxymethyl)pyrimidine + 2 H(+) = thiamine phosphate + CO2 + diphosphate. The catalysed reaction is 4-methyl-5-(2-phosphooxyethyl)-thiazole + 4-amino-2-methyl-5-(diphosphooxymethyl)pyrimidine + H(+) = thiamine phosphate + diphosphate. It participates in cofactor biosynthesis; thiamine diphosphate biosynthesis; thiamine phosphate from 4-amino-2-methyl-5-diphosphomethylpyrimidine and 4-methyl-5-(2-phosphoethyl)-thiazole: step 1/1. In terms of biological role, condenses 4-methyl-5-(beta-hydroxyethyl)thiazole monophosphate (THZ-P) and 2-methyl-4-amino-5-hydroxymethyl pyrimidine pyrophosphate (HMP-PP) to form thiamine monophosphate (TMP). In Chromobacterium violaceum (strain ATCC 12472 / DSM 30191 / JCM 1249 / CCUG 213 / NBRC 12614 / NCIMB 9131 / NCTC 9757 / MK), this protein is Thiamine-phosphate synthase.